The following is a 360-amino-acid chain: GTPase Obg (360 aa).

Residues 1-156 (MFVDSVEIII…KCVRLELKLI (156 aa)) enclose the Obg domain. One can recognise an OBG-type G domain in the interval 157-360 (ADIGLVGFPN…LKFVLLEALP (204 aa)). GTP is bound by residues 163–170 (GFPNAGKS), 188–192 (FTTLV), 210–213 (DIPG), 279–282 (NKCD), and 341–343 (SAV). Mg(2+)-binding residues include serine 170 and threonine 190.

Belongs to the TRAFAC class OBG-HflX-like GTPase superfamily. OBG GTPase family. In terms of assembly, monomer. Mg(2+) is required as a cofactor.

It is found in the cytoplasm. An essential GTPase which binds GTP, GDP and possibly (p)ppGpp with moderate affinity, with high nucleotide exchange rates and a fairly low GTP hydrolysis rate. Plays a role in control of the cell cycle, stress response, ribosome biogenesis and in those bacteria that undergo differentiation, in morphogenesis control. This chain is GTPase Obg, found in Helicobacter pylori (strain HPAG1).